We begin with the raw amino-acid sequence, 115 residues long: Large ribosomal subunit protein bL20c (115 aa).

Belongs to the bacterial ribosomal protein bL20 family.

The protein resides in the plastid. Its subcellular location is the chloroplast. Functionally, binds directly to 23S ribosomal RNA and is necessary for the in vitro assembly process of the 50S ribosomal subunit. It is not involved in the protein synthesizing functions of that subunit. This chain is Large ribosomal subunit protein bL20c, found in Angiopteris evecta (Mule's foot fern).